We begin with the raw amino-acid sequence, 396 residues long: Elongation factor Tu (396 aa).

In terms of domain architecture, tr-type G spans 10 to 206 (KPHVNVGTIG…ALDTYIPTPE (197 aa)). Residues 19-26 (GHVDHGKT) form a G1 region. Position 19–26 (19–26 (GHVDHGKT)) interacts with GTP. Thr-26 is a binding site for Mg(2+). Residues 60-64 (GITIN) form a G2 region. Residues 81–84 (DCPG) form a G3 region. Residues 81-85 (DCPGH) and 136-139 (NKAD) each bind GTP. Positions 136–139 (NKAD) are G4. Residues 174–176 (SAK) form a G5 region.

The protein belongs to the TRAFAC class translation factor GTPase superfamily. Classic translation factor GTPase family. EF-Tu/EF-1A subfamily. In terms of assembly, monomer.

It localises to the cytoplasm. It carries out the reaction GTP + H2O = GDP + phosphate + H(+). In terms of biological role, GTP hydrolase that promotes the GTP-dependent binding of aminoacyl-tRNA to the A-site of ribosomes during protein biosynthesis. The protein is Elongation factor Tu of Bordetella bronchiseptica (strain ATCC BAA-588 / NCTC 13252 / RB50) (Alcaligenes bronchisepticus).